The sequence spans 72 residues: Translational regulator CsrA (72 aa).

Belongs to the CsrA/RsmA family. Homodimer; the beta-strands of each monomer intercalate to form a hydrophobic core, while the alpha-helices form wings that extend away from the core.

The protein resides in the cytoplasm. Functionally, a translational regulator that binds mRNA to regulate translation initiation and/or mRNA stability. Usually binds in the 5'-UTR at or near the Shine-Dalgarno sequence preventing ribosome-binding, thus repressing translation. Its main target seems to be the major flagellin gene, while its function is anatagonized by FliW. The chain is Translational regulator CsrA from Clostridium botulinum (strain ATCC 19397 / Type A).